A 132-amino-acid chain; its full sequence is Small ribosomal subunit protein uS8 (132 aa).

Belongs to the universal ribosomal protein uS8 family. Part of the 30S ribosomal subunit. Contacts proteins S5 and S12.

One of the primary rRNA binding proteins, it binds directly to 16S rRNA central domain where it helps coordinate assembly of the platform of the 30S subunit. In Mycobacterium marinum (strain ATCC BAA-535 / M), this protein is Small ribosomal subunit protein uS8.